A 418-amino-acid chain; its full sequence is Serine hydroxymethyltransferase (418 aa).

(6S)-5,6,7,8-tetrahydrofolate-binding positions include Leu-121 and 125-127 (GHL). The residue at position 230 (Lys-230) is an N6-(pyridoxal phosphate)lysine. 356 to 358 (SPF) lines the (6S)-5,6,7,8-tetrahydrofolate pocket.

This sequence belongs to the SHMT family. Homodimer. It depends on pyridoxal 5'-phosphate as a cofactor.

It is found in the cytoplasm. It carries out the reaction (6R)-5,10-methylene-5,6,7,8-tetrahydrofolate + glycine + H2O = (6S)-5,6,7,8-tetrahydrofolate + L-serine. Its pathway is one-carbon metabolism; tetrahydrofolate interconversion. It functions in the pathway amino-acid biosynthesis; glycine biosynthesis; glycine from L-serine: step 1/1. Functionally, catalyzes the reversible interconversion of serine and glycine with tetrahydrofolate (THF) serving as the one-carbon carrier. This reaction serves as the major source of one-carbon groups required for the biosynthesis of purines, thymidylate, methionine, and other important biomolecules. Also exhibits THF-independent aldolase activity toward beta-hydroxyamino acids, producing glycine and aldehydes, via a retro-aldol mechanism. This is Serine hydroxymethyltransferase from Pseudoalteromonas atlantica (strain T6c / ATCC BAA-1087).